Reading from the N-terminus, the 299-residue chain is Protoheme IX farnesyltransferase (299 aa).

The next 9 helical transmembrane spans lie at 25–45 (VVLLMLITSLVGMFLATRAGV), 47–67 (WTVLLFGNLGIGLCAGAAAAV), 95–115 (AAAIAFALLLATAGMGLLLLF), 119–139 (LAAWLTLASLLGYAVIYTGFL), 147–167 (IVIGGLAGAAPPLLGWVAVTG), 173–193 (PLLLVLIIFAWTPPHFWALAI), 218–238 (VHILLYTLVMFAVTLLPYAIH), 243–263 (LYLVCALLLGARFLHWAWVLY), and 279–299 (IWYLFLLFIALLADHYLLLNI).

It belongs to the UbiA prenyltransferase family. Protoheme IX farnesyltransferase subfamily.

The protein resides in the cell inner membrane. The enzyme catalyses heme b + (2E,6E)-farnesyl diphosphate + H2O = Fe(II)-heme o + diphosphate. It participates in porphyrin-containing compound metabolism; heme O biosynthesis; heme O from protoheme: step 1/1. Its function is as follows. Converts heme B (protoheme IX) to heme O by substitution of the vinyl group on carbon 2 of heme B porphyrin ring with a hydroxyethyl farnesyl side group. This chain is Protoheme IX farnesyltransferase, found in Ectopseudomonas mendocina (strain ymp) (Pseudomonas mendocina).